A 283-amino-acid chain; its full sequence is Polyamine aminopropyltransferase (283 aa).

Residues 2 to 237 (ELWYTEEHTD…GHWLFGFASK (236 aa)) enclose the PABS domain. Residue Q31 participates in S-methyl-5'-thioadenosine binding. Residues H62 and D86 each coordinate spermidine. Residues E106 and 137–138 (DG) each bind S-methyl-5'-thioadenosine. The active-site Proton acceptor is the D155. 155–158 (DSTD) is a binding site for spermidine. P162 lines the S-methyl-5'-thioadenosine pocket.

Belongs to the spermidine/spermine synthase family. Homodimer or homotetramer.

It localises to the cytoplasm. The catalysed reaction is S-adenosyl 3-(methylsulfanyl)propylamine + putrescine = S-methyl-5'-thioadenosine + spermidine + H(+). Its pathway is amine and polyamine biosynthesis; spermidine biosynthesis; spermidine from putrescine: step 1/1. Functionally, catalyzes the irreversible transfer of a propylamine group from the amino donor S-adenosylmethioninamine (decarboxy-AdoMet) to putrescine (1,4-diaminobutane) to yield spermidine. This chain is Polyamine aminopropyltransferase, found in Clostridium perfringens (strain SM101 / Type A).